The chain runs to 377 residues: Queuine tRNA-ribosyltransferase (377 aa).

Catalysis depends on aspartate 89, which acts as the Proton acceptor. Substrate contacts are provided by residues 89 to 93 (DSGGF), aspartate 143, glutamine 188, and glycine 215. The interval 246-252 (GVGKPED) is RNA binding. The Nucleophile role is filled by aspartate 265. The tract at residues 270 to 274 (TRNAR) is RNA binding; important for wobble base 34 recognition. Zn(2+)-binding residues include cysteine 303, cysteine 305, cysteine 308, and histidine 334.

The protein belongs to the queuine tRNA-ribosyltransferase family. As to quaternary structure, homodimer. Within each dimer, one monomer is responsible for RNA recognition and catalysis, while the other monomer binds to the replacement base PreQ1. The cofactor is Zn(2+).

The catalysed reaction is 7-aminomethyl-7-carbaguanine + guanosine(34) in tRNA = 7-aminomethyl-7-carbaguanosine(34) in tRNA + guanine. It participates in tRNA modification; tRNA-queuosine biosynthesis. Functionally, catalyzes the base-exchange of a guanine (G) residue with the queuine precursor 7-aminomethyl-7-deazaguanine (PreQ1) at position 34 (anticodon wobble position) in tRNAs with GU(N) anticodons (tRNA-Asp, -Asn, -His and -Tyr). Catalysis occurs through a double-displacement mechanism. The nucleophile active site attacks the C1' of nucleotide 34 to detach the guanine base from the RNA, forming a covalent enzyme-RNA intermediate. The proton acceptor active site deprotonates the incoming PreQ1, allowing a nucleophilic attack on the C1' of the ribose to form the product. After dissociation, two additional enzymatic reactions on the tRNA convert PreQ1 to queuine (Q), resulting in the hypermodified nucleoside queuosine (7-(((4,5-cis-dihydroxy-2-cyclopenten-1-yl)amino)methyl)-7-deazaguanosine). The sequence is that of Queuine tRNA-ribosyltransferase from Acinetobacter baumannii (strain SDF).